Reading from the N-terminus, the 887-residue chain is MAPPSPREHQSAPATSATKPDAEMVLPGFPDADSFVKFALGSVVAVTKASGGLPQFGDEYDFYRSFPAFQAFCETQGDRLLQCMSRVMQYHGCRSNIKDRSKVTELEDKFDLLVDTNDVILERVGMLLDEASGVNKHQQPVLPAGLQVPKTIVSSWNRKAGEYGKKAKSETFRLLHAKNIVRPQLRFREKIDNSNTPFLPKIFVKPNARKPLPLALSKERRERPQDRPEDLDVPPALADFIHQQRTQQVEQDMFAHPYQYELDHFTPPQSVLQRPKPQLYRAVGETPCHLVSSLDELVELNEKLLGCQEFAVDLEHHSYRSFLGLTCLMQISTRTEDFIVDTLELRSDMYILNESLTDPAIVKVFHGADSDIEWLQKDFGLYVVNMFDTHQAARLLNLARHSLDHLLRLYCGVESNKQYQLADWRIRPLPEEMLSYARDDTHYLLYIYDRMRLELWERGNHQPVQLQVVWQRSRDICLKKFVKPIFTDESYLELYRKQKKHLNSQQLTAFQLLFAWRDKTARREDESYGYVLPNHMMLKIAEELPKEPQGIIACCNPVPPLVRQQINEMHLLIQQAREMPLLKSENAAGVRKSGPLPSAERLENDLFGPHDCSHAPPDNYQNTSTDGTLPLQKQPSLFTEGKEETSVDAGCLLATAVITLFSEPNTEEGGKTPLTVAQKKAQNIMQSFENPFRMFLPSLEHKAHISQAAKFDPSSKIYEISNRWKLASQVQVQKEPKEATKKKVAEQTAAREEAKEEAAAGVLEQAIPVRQQAALENATKKRERATSDLRTIEQKQEKKRLKSSKKAKDPDPPGKDFSPYDYSQSDFRAFAGDSKSKPSSQFDPNKLAPSGKKGVGAKKCKQSVGNKSMSFAVGKSDRGFRHNWPKR.

The segment covering 1 to 10 (MAPPSPREHQ) has biased composition (basic and acidic residues). Residues 1 to 23 (MAPPSPREHQSAPATSATKPDAE) are disordered. Lysine 19 is covalently cross-linked (Glycyl lysine isopeptide (Lys-Gly) (interchain with G-Cter in SUMO2)). The 3'-5' exonuclease domain occupies 289–455 (HLVSSLDELV…YIYDRMRLEL (167 aa)). Mg(2+)-binding residues include aspartate 313, glutamate 315, aspartate 371, and aspartate 440. The region spanning 503-583 (NSQQLTAFQL…QQAREMPLLK (81 aa)) is the HRDC domain. Lysine 583 is covalently cross-linked (Glycyl lysine isopeptide (Lys-Gly) (interchain with G-Cter in SUMO1); alternate). Residue lysine 583 forms a Glycyl lysine isopeptide (Lys-Gly) (interchain with G-Cter in SUMO2); alternate linkage. Residue lysine 710 forms a Glycyl lysine isopeptide (Lys-Gly) (interchain with G-Cter in SUMO2) linkage. Disordered regions lie at residues 734–757 (KEPK…AKEE) and 777–887 (NATK…WPKR). Residues 778–796 (ATKKRERATSDLRTIEQKQ) are compositionally biased toward basic and acidic residues. The residue at position 823 (serine 823) is a Phosphoserine. Residues lysine 835, lysine 861, and lysine 875 each participate in a glycyl lysine isopeptide (Lys-Gly) (interchain with G-Cter in SUMO2) cross-link.

Belongs to the exosome component 10/RRP6 family. In terms of assembly, component of the RNA exosome complex. The catalytically inactive RNA exosome core complex (Exo-9) associates with the catalytic subunit EXOSC10/RRP6 (via its N-terminus). Exo-9 may associate with DIS3 to form the nucleolar exosome complex, or DIS3L to form the cytoplasmic exosome complex. The RNA exosome complex interacts with cofactors C1D/RRP47, MPHOSPH6/MPP6 and MTREX/MTR4. Interacts with MTREX; the interaction with MTREX mediates the association of MTREX with nuclear RNA exosomes. Part of the small subunit (SSU) processome, composed of more than 70 proteins and the RNA chaperone small nucleolar RNA (snoRNA) U3. Interacts with ALYREF/THOC4. Interacts with DHX36; this interaction occurs in a RNase-insensitive manner. Interacts with NRDE2. Interacts (via C-terminus) with USP36 (via C-terminus); the interaction is facilitated by the association with RNA and promotes sumoylation of EXOSC10. It depends on Mg(2+) as a cofactor. Sumoylated by USP36; sumoylation does not significantly affect EXOSC10 nucleolar localization and association with core exosome and USP36, but regulates the nucleolar RNA exosome activity in rRNA processing by promoting binding of EXOSC10 to pre-rRNAs. Effects of sumoylation on EXOSC10 levels vary between different studies. Sumoylation of EXOSC10 is required for the modulation of EXOSC10 effects on cellular protein translation and cell proliferation. Sumoylation is promoted by mild hypothermia. In terms of tissue distribution, expressed in ovary (at protein level). Expressed in testis (at protein level). Expressed in lung (at protein level).

Its subcellular location is the cytoplasm. The protein resides in the nucleus. It is found in the nucleolus. The protein localises to the nucleoplasm. Functionally, catalytic component of the RNA exosome complex which has 3'-&gt;5' exoribonuclease activity and participates in a multitude of cellular RNA processing and degradation events. In the nucleus, the RNA exosome complex is involved in proper maturation of stable RNA species such as rRNA, snRNA and snoRNA, in the elimination of RNA processing by-products and non-coding 'pervasive' transcripts, such as antisense RNA species and promoter-upstream transcripts (PROMPTs), and of mRNAs with processing defects, thereby limiting or excluding their export to the cytoplasm. Part of the small subunit (SSU) processome, first precursor of the small eukaryotic ribosomal subunit. During the assembly of the SSU processome in the nucleolus, many ribosome biogenesis factors, an RNA chaperone and ribosomal proteins associate with the nascent pre-rRNA and work in concert to generate RNA folding, modifications, rearrangements and cleavage as well as targeted degradation of pre-ribosomal RNA by the RNA exosome. The RNA exosome may be involved in Ig class switch recombination (CSR) and/or Ig variable region somatic hypermutation (SHM) by targeting AICDA deamination activity to transcribed dsDNA substrates. In the cytoplasm, the RNA exosome complex is involved in general mRNA turnover and specifically degrades inherently unstable mRNAs containing AU-rich elements (AREs) within their 3' untranslated regions, and in RNA surveillance pathways, preventing translation of aberrant mRNAs. It seems to be involved in degradation of histone mRNA. EXOSC10 is required for nucleolar localization of C1D and probably mediates the association of MTREX, C1D and MPHOSPH6 with the RNA exosome involved in the maturation of 5.8S rRNA. Plays a role in the recruitment of replication protein A complex (RPA) and RAD51 to DNA double-strand breaks caused by irradiation, contributing to DNA repair by homologous recombination. Regulates levels of damage-induced RNAs in order to prevent DNA-RNA hybrid formation at DNA double-strand breaks and limit DNA end resection after damage. Plays a role in oocyte development, maturation and survival. Required for normal testis development and mitotic division of spermatogonia. Plays a role in proper embryo development. Required for global protein translation. Required for cell proliferation. In Mus musculus (Mouse), this protein is Exosome complex component 10 (Exosc10).